Here is a 402-residue protein sequence, read N- to C-terminus: Propionate kinase (402 aa).

Positions 11 and 18 each coordinate ATP. Position 11 (Asn11) interacts with Mg(2+). Residue Arg86 coordinates substrate. The active-site Proton donor/acceptor is the Asp143. ATP is bound by residues His175, His203 to Gly207, Asp278 to Arg280, and Gly326 to Asn330.

The protein belongs to the acetokinase family. TdcD subfamily. Homodimer. It depends on Mg(2+) as a cofactor.

The catalysed reaction is propanoate + ATP = propanoyl phosphate + ADP. The protein operates within amino-acid degradation; L-threonine degradation via propanoate pathway; propanoate from L-threonine: step 4/4. Catalyzes the conversion of propionyl phosphate and ADP to propionate and ATP. This chain is Propionate kinase, found in Escherichia coli O6:H1 (strain CFT073 / ATCC 700928 / UPEC).